The following is a 439-amino-acid chain: Phthalate 4,5-dioxygenase oxygenase subunit (439 aa).

The 108-residue stretch at W27 to A134 folds into the Rieske domain. [2Fe-2S] cluster contacts are provided by C70, H72, C89, and H92. Positions 181 and 186 each coordinate Fe cation.

Belongs to the bacterial ring-hydroxylating dioxygenase alpha subunit family. This dioxygenase system consists of two proteins: phthalate oxygenase and phthalate oxygenase reductase. [2Fe-2S] cluster is required as a cofactor. It depends on Fe cation as a cofactor.

The enzyme catalyses phthalate + NADH + O2 + H(+) = cis-4,5-dihydroxycyclohexa-2,6-diene-1,2-dicarboxylate + NAD(+). The protein operates within xenobiotic degradation; phthalate degradation; 3,4-dihydroxybenzoate from phthalate: step 1/3. In Pseudomonas putida (Arthrobacter siderocapsulatus), this protein is Phthalate 4,5-dioxygenase oxygenase subunit (pht3).